A 340-amino-acid chain; its full sequence is Cytosolic Fe-S cluster assembly factor NBP35 (340 aa).

The segment at 1-41 (MPSLVDPVANKTDEGNNRTDLKAPEPEHCPGTESEEAGKAD) is disordered. The segment covering 11–30 (KTDEGNNRTDLKAPEPEHCP) has biased composition (basic and acidic residues). [4Fe-4S] cluster is bound by residues C29, C43, C46, and C52. 82 to 89 (GKGGVGKS) is a binding site for ATP. Residues C255 and C258 each coordinate [4Fe-4S] cluster.

The protein belongs to the Mrp/NBP35 ATP-binding proteins family. NUBP1/NBP35 subfamily. In terms of assembly, heterotetramer of 2 NBP35 and 2 CFD1 chains. [4Fe-4S] cluster is required as a cofactor.

It is found in the cytoplasm. Its subcellular location is the nucleus. Its function is as follows. Component of the cytosolic iron-sulfur (Fe/S) protein assembly (CIA) machinery. Required for maturation of extramitochondrial Fe-S proteins. The NBP35-CFD1 heterotetramer forms a Fe-S scaffold complex, mediating the de novo assembly of an Fe-S cluster and its transfer to target apoproteins. Required for biogenesis and export of both ribosomal subunits, which may reflect a role in assembly of the Fe/S clusters in RLI1, a protein which performs rRNA processing and ribosome export. The protein is Cytosolic Fe-S cluster assembly factor NBP35 of Yarrowia lipolytica (strain CLIB 122 / E 150) (Yeast).